Consider the following 429-residue polypeptide: Enolase (429 aa).

(2R)-2-phosphoglycerate is bound at residue Gln-163. The active-site Proton donor is Glu-205. Positions 242, 285, and 312 each coordinate Mg(2+). Residues Lys-337, Arg-366, Ser-367, and Lys-388 each contribute to the (2R)-2-phosphoglycerate site. The active-site Proton acceptor is Lys-337.

This sequence belongs to the enolase family. Mg(2+) is required as a cofactor.

Its subcellular location is the cytoplasm. It localises to the secreted. It is found in the cell surface. The enzyme catalyses (2R)-2-phosphoglycerate = phosphoenolpyruvate + H2O. The protein operates within carbohydrate degradation; glycolysis; pyruvate from D-glyceraldehyde 3-phosphate: step 4/5. Functionally, catalyzes the reversible conversion of 2-phosphoglycerate (2-PG) into phosphoenolpyruvate (PEP). It is essential for the degradation of carbohydrates via glycolysis. The protein is Enolase of Methylorubrum extorquens (strain PA1) (Methylobacterium extorquens).